We begin with the raw amino-acid sequence, 172 residues long: Small ribosomal subunit protein uS5 (172 aa).

The S5 DRBM domain occupies 16 to 79; that stretch reads LKEKLVHINR…EDGKKNVVKV (64 aa).

Belongs to the universal ribosomal protein uS5 family. In terms of assembly, part of the 30S ribosomal subunit. Contacts proteins S4 and S8.

In terms of biological role, with S4 and S12 plays an important role in translational accuracy. Its function is as follows. Located at the back of the 30S subunit body where it stabilizes the conformation of the head with respect to the body. The sequence is that of Small ribosomal subunit protein uS5 from Prosthecochloris aestuarii (strain DSM 271 / SK 413).